Here is a 446-residue protein sequence, read N- to C-terminus: N-succinylarginine dihydrolase (446 aa).

Residues Ala-19–Ser-28, Asn-110, and His-137–Arg-138 each bind substrate. Residue Glu-174 is part of the active site. A substrate-binding site is contributed by Arg-213. His-249 is a catalytic residue. Substrate-binding residues include Asp-251 and Asn-364. Cys-370 serves as the catalytic Nucleophile.

This sequence belongs to the succinylarginine dihydrolase family. In terms of assembly, homodimer.

The enzyme catalyses N(2)-succinyl-L-arginine + 2 H2O + 2 H(+) = N(2)-succinyl-L-ornithine + 2 NH4(+) + CO2. The protein operates within amino-acid degradation; L-arginine degradation via AST pathway; L-glutamate and succinate from L-arginine: step 2/5. In terms of biological role, catalyzes the hydrolysis of N(2)-succinylarginine into N(2)-succinylornithine, ammonia and CO(2). This chain is N-succinylarginine dihydrolase, found in Burkholderia cenocepacia (strain ATCC BAA-245 / DSM 16553 / LMG 16656 / NCTC 13227 / J2315 / CF5610) (Burkholderia cepacia (strain J2315)).